Consider the following 432-residue polypeptide: Adenylosuccinate synthetase (432 aa).

Residues 12-18 (GDEGKGK) and 40-42 (GHT) contribute to the GTP site. The active-site Proton acceptor is Asp-13. Mg(2+) contacts are provided by Asp-13 and Gly-40. IMP contacts are provided by residues 13 to 16 (DEGK), 38 to 41 (NAGH), Thr-132, Arg-146, Gln-226, Thr-241, and Arg-305. The active-site Proton donor is the His-41. 301-307 (TVTGRKR) provides a ligand contact to substrate. Residues Arg-307, 333 to 335 (KLD), and 415 to 417 (STS) contribute to the GTP site.

This sequence belongs to the adenylosuccinate synthetase family. Homodimer. Mg(2+) is required as a cofactor.

It is found in the cytoplasm. The catalysed reaction is IMP + L-aspartate + GTP = N(6)-(1,2-dicarboxyethyl)-AMP + GDP + phosphate + 2 H(+). It functions in the pathway purine metabolism; AMP biosynthesis via de novo pathway; AMP from IMP: step 1/2. Functionally, plays an important role in the de novo pathway of purine nucleotide biosynthesis. Catalyzes the first committed step in the biosynthesis of AMP from IMP. The protein is Adenylosuccinate synthetase of Sinorhizobium medicae (strain WSM419) (Ensifer medicae).